A 697-amino-acid chain; its full sequence is Trishanku (697 aa).

Residues 1-94 (MEIEPVVRIS…NNNSNSNGTD (94 aa)) form a disordered region. Residues 12-47 (NGNNNQNNNNNNNNNTNNNSNNNNNNNNSSNINSTN) are compositionally biased toward low complexity. Over residues 58 to 72 (KMISNINNQKSPNPL) the composition is skewed to polar residues. Positions 73 to 91 (NSSVDDNNNTNNNNNSNSN) are enriched in low complexity. A BTB domain is found at 122–189 (SDVIFKVGDR…ICIGILDLDY (68 aa)). The tract at residues 311–455 (IQQQQQQQQQ…DSANDDYEYS (145 aa)) is disordered. Residues 312–331 (QQQQQQQQQQLQSANGASGK) are compositionally biased toward low complexity. The segment covering 332 to 344 (SHGKRSSSSHLKK) has biased composition (basic residues). The span at 353-363 (GSCSSRCSSRR) shows a compositional bias: low complexity. Over residues 416-453 (DDFENDSEDGDDDDEDDDEDDDFTDDDDKDDSANDDYE) the composition is skewed to acidic residues.

Expressed strongly in presumptive spore (prespore or psp) cells during the late G2 phase of cell cycle. Present at a low level in vegetative cells.

In terms of biological role, required for normal morphogenesis and cell-type stability. The sequence is that of Trishanku (triA) from Dictyostelium discoideum (Social amoeba).